A 412-amino-acid polypeptide reads, in one-letter code: Vacuolar calcium ion transporter (412 aa).

Over 1-55 (MIERLKIAKNRLEAMNSFNFPAQDRHERAPLLGSEYDHSMARQLSLLNVVGMTKS) the chain is Cytoplasmic. The helical transmembrane segment at 56-76 (VLMSSYFNLMLVFVPIGLIAG) threads the bilayer. The Lumenal segment spans residues 77 to 83 (WFEWNAK). The helical transmembrane segment at 84–104 (SVFILNMLAIIPLASLLSFAT) threads the bilayer. Residues 105-114 (EQLSIISGPT) are Cytoplasmic-facing. The chain crosses the membrane as a helical span at residues 115–135 (LGALLNASFGNAIELIVGVLA). At 136–148 (LKRGELRIVQSSL) the chain is on the lumenal side. A helical membrane pass occupies residues 149–169 (LGSILSNLLLVFGMCLVTTGI). Residues 170–177 (RREITTFN) lie on the Cytoplasmic side of the membrane. A helical membrane pass occupies residues 178-198 (ITVAQTMIAMLALSTATILIP). The Lumenal segment spans residues 199-215 (ATFHYSLPDNANSENAL). A helical transmembrane segment spans residues 216–236 (LHVSRGTAVIVLIVYVLLLVF). Topologically, residues 237 to 264 (QLKTHKHVCHDPSEVEEETEPRILGLRS) are cytoplasmic. Residues 265-285 (SIAMLAIVTVFVSLCADYLVG) traverse the membrane as a helical segment. The Lumenal portion of the chain corresponds to 286–299 (SIDQLVEEVNISKT). Residues 300 to 320 (FVGLVILPVVGNAAEHVTAIV) traverse the membrane as a helical segment. The Cytoplasmic portion of the chain corresponds to 321-334 (VSYRGQMDLALGVA). The helical transmembrane segment at 335–355 (IGSSIQIALFLAPFLVIVGWI) threads the bilayer. At 356-358 (ISQ) the chain is on the lumenal side. A helical membrane pass occupies residues 359-379 (PLTLYFESLETVILFVSVFLV). The Cytoplasmic portion of the chain corresponds to 380 to 389 (NYLIQDGATH). The chain crosses the membrane as a helical span at residues 390-410 (WLEGVQLLALYAIVVLAFFYY). Topologically, residues 411–412 (PQ) are lumenal.

It belongs to the Ca(2+):cation antiporter (CaCA) (TC 2.A.19) family.

It is found in the vacuole membrane. Its subcellular location is the endoplasmic reticulum membrane. In terms of biological role, has a role in promoting intracellular calcium ion sequestration via the exchange of calcium ions for hydrogen ions across the vacuolar membrane. Involved also in manganese ion homeostasis via its uptake into the vacuole. The chain is Vacuolar calcium ion transporter (vcx1) from Schizosaccharomyces pombe (strain 972 / ATCC 24843) (Fission yeast).